Here is a 289-residue protein sequence, read N- to C-terminus: tRNA pseudouridine synthase B (289 aa).

The active-site Nucleophile is the Asp-38.

It belongs to the pseudouridine synthase TruB family. Type 1 subfamily.

It catalyses the reaction uridine(55) in tRNA = pseudouridine(55) in tRNA. Responsible for synthesis of pseudouridine from uracil-55 in the psi GC loop of transfer RNAs. This chain is tRNA pseudouridine synthase B, found in Clostridium tetani (strain Massachusetts / E88).